A 2349-amino-acid chain; its full sequence is Reducing polyketide synthase hmp8 (2349 aa).

The Ketosynthase family 3 (KS3) domain maps to 9–435 (HVPVAIIGLA…GTNGHVVLEA (427 aa)). Active-site for beta-ketoacyl synthase activity residues include Cys182, His317, and His357. Positions 551-856 (FVFTGQGAQW…SHNGIKNVAY (306 aa)) are malonyl-CoA:ACP transacylase (MAT) domain. An N-terminal hotdog fold region spans residues 930–1066 (RSLIGAPVPM…GLVAIDYEES (137 aa)). The PKS/mFAS DH domain maps to 930–1250 (RSLIGAPVPM…TSELDMDSGK (321 aa)). Residues 932 to 1244 (LIGAPVPMMA…SVKDFRTSEL (313 aa)) form a dehydratase (DH) domain region. The active-site Proton acceptor; for dehydratase activity is the His962. Positions 1094 to 1250 (PEHYAHDKFY…TSELDMDSGK (157 aa)) are C-terminal hotdog fold. Asp1160 serves as the catalytic Proton donor; for dehydratase activity. Residues 1641 to 1953 (GLLDTLKFVP…QGKHRGKMVL (313 aa)) are enoyl reductase (ER) domain. The ketoreductase (KR) domain stretch occupies residues 1977 to 2157 (ATYLFVGGLG…ISVNLGIMRD (181 aa)). One can recognise a Carrier domain in the interval 2267-2344 (EAAEIITDAL…SFAVKIAEKS (78 aa)). Ser2304 is modified (O-(pantetheine 4'-phosphoryl)serine).

It functions in the pathway secondary metabolite biosynthesis. In terms of biological role, reducing polyketide synthase; part of the gene cluster that mediates the biosynthesis of hypothemycin, a resorcylic acid lactone (RAL) that irreversibly inhibits a subset of protein kinases with a conserved cysteine in the ATP binding site such as human ERK2. The first step is performed by both PKSs hmp3 and hmp8 and leads to the production of 7',8'-dehydrozearalenol (DHZ). The highly reducing PKS hpm8 synthesizes the reduced hexaketide (7S,11S,2E,8E)-7,11-dihydroxy-dodeca-2,8-dienoate, which is transferred downstream to the non-reducing PKS hpm3. Hpm3 then extends the reduced hexaketide to a nonaketide, after which regioselective cyclization and macrolactonization affords DHZ. The next step is the conversion of DHZ into aigialomycin C and is performed by the O-methyltransferase hmp5, the FAD-binding monooxygenase hmp7, and the cytochrome P450 monooxygenase hmp1. The wide substrate tolerance of the hmp5 and hmp7 implies that the reactions from DHZ to aigialomycin C can occur in any order. The steps from aigialomycin C to hypothemycin are less well established. The FAD-linked oxidoreductase hmp9 presumably catalyzes oxidation of the C-6' hydroxyl to a ketone. The timing of this oxidation is important, since the resulting enone functional group is a Michael acceptor that can react spontaneously with glutathione, an abundant metabolite in fungal cells. The glutathione S-transferase hmp2 catalyzes cis-trans isomerization of the 7',8' double bond with equilibrium favoring the trans isomer. The hpm6-encoded transporter might preferentially pump hypothemycin out of the cell relative to the trans isomer aigialomycin A. The cis-to-trans isomerization may be coupled with C-4' hydroxylation, since all known hypothemycin analogs containing the enone functional group also have hydroxyl groups at both C-4' and C-5'. In Hypomyces subiculosus (Nectria subiculosa), this protein is Reducing polyketide synthase hmp8.